The sequence spans 145 residues: MKVILIKDTKDGKANTIIDVSPGYATNFLFKNKLAEPLNARTEKLLVKRKQQIEIEKQEKQEQIAKLKIEIEKLVLWFKLKGNKESVHGAITAKKIKKELEIKGIFVDKQAIQTSGISTFGTSFVDIKLSSQTIAKLKINITKDE.

It belongs to the bacterial ribosomal protein bL9 family.

Its function is as follows. Binds to the 23S rRNA. In Mesomycoplasma hyopneumoniae (strain J / ATCC 25934 / NCTC 10110) (Mycoplasma hyopneumoniae), this protein is Large ribosomal subunit protein bL9.